Here is a 286-residue protein sequence, read N- to C-terminus: Oxidase hkm6 (286 aa).

H16, H25, and H215 together coordinate Cu cation.

Belongs to the tyrosinase family. Cu(2+) serves as cofactor.

It participates in secondary metabolite biosynthesis. Its function is as follows. Oxidase; part of the gene cluster that mediates the biosynthesis of hancockiamides, an unusual new family of N-cinnamoylated piperazines. The NRPS hkm10 and the NmrA-like reductase hkm9 are proposed to convert two molecules of L-Phe to the intermediary piperazine called xenocockiamide A. Xenocockiamide A is then converted to hancockiamide D via a series of hydroxylations and O-methylations. The tyrosinase hkm6 may catalyze an aromatic hydroxylation, then the 2-oxoglutarate-dependent Fe(II) dioxygenase hkm4 and the FAD-dependent phenol hydroxylase hkm7 may catalyze consecutive hydroxylations to install 2 more hydroxy groups, and the methyltransferase hkm8 probably catalyzes two methylations using 2 molecules of S-adenosyl-L-methionine (SAM). The NRPS hkm11 activates and transfers trans-cinnamate supplied by the PAL hkm12 to hancockiamide D and produces hancockiamide A. NRPS Hkm11 has the flexibility to tolerate the bulky hancockiamide G as a substrate and the absence of the acetyl-transferase hkm3 opens up the opportunity for hkm11 to introduce a second N-cinnamoyl moiety. The cytochrome P450 monooxygenase hkm5 catalyzes the methylenedioxy bridge formation, converting hancockiamide A into hancockiamide G. Hkm5 can also convert hancockiamide B into hancockiamide C, and hancockiamide D into hancockiamide H. The N-acetyltransferase hkm3 finally transfers an acetyl group to 1-N of piperazine, converting hancockiamide A into hancockiamide B and hancockiamide G into hancockiamide C. This chain is Oxidase hkm6, found in Aspergillus hancockii.